A 118-amino-acid chain; its full sequence is UPF0295 protein GWCH70_0499 (118 aa).

A run of 2 helical transmembrane segments spans residues 12–32 (IRTFALSLIFVGFIVMYIGIF) and 42–62 (LFMILGLLFIIASTVVYFWIG).

This sequence belongs to the UPF0295 family.

Its subcellular location is the cell membrane. The chain is UPF0295 protein GWCH70_0499 from Geobacillus sp. (strain WCH70).